The sequence spans 531 residues: Nuclear RNA export factor 3 (531 aa).

Disordered regions lie at residues 33-59 (RSEP…HGAH) and 83-106 (QDQT…GNMP). Positions 41–50 (MHSSSHQQQD) are enriched in polar residues. Basic and acidic residues predominate over residues 83-102 (QDQTHVNMEREQKPPERRME). Positions 113-192 (WFKITVPFGI…IFVNPAGIPH (80 aa)) constitute an RRM domain. Residues 344–494 (LVLQFLQQYY…LCIVNDKLFV (151 aa)) form the NTF2 domain.

This sequence belongs to the NXF family. As to quaternary structure, interacts with NXT1, NXT2, E1B-AP5 and CRM1 nuclear export factor. Expressed at high level in testis and at low level in a small number of tissues.

The protein resides in the nucleus. It is found in the cytoplasm. May function as a tissue-specific nuclear mRNA export factor. This Homo sapiens (Human) protein is Nuclear RNA export factor 3 (NXF3).